Reading from the N-terminus, the 437-residue chain is tRNA-2-methylthio-N(6)-dimethylallyladenosine synthase (437 aa).

An MTTase N-terminal domain is found at 3-120 (RKLFIETHGC…LPEMIDAART (118 aa)). Positions 12, 49, 83, 157, 161, and 164 each coordinate [4Fe-4S] cluster. The 228-residue stretch at 143 to 370 (RVDGPSAYVS…QQRINQQGFE (228 aa)) folds into the Radical SAM core domain. The TRAM domain occupies 373 to 437 (RRMVGTTQRI…PHSLRGSLLS (65 aa)).

This sequence belongs to the methylthiotransferase family. MiaB subfamily. As to quaternary structure, monomer. [4Fe-4S] cluster is required as a cofactor.

It localises to the cytoplasm. The enzyme catalyses N(6)-dimethylallyladenosine(37) in tRNA + (sulfur carrier)-SH + AH2 + 2 S-adenosyl-L-methionine = 2-methylsulfanyl-N(6)-dimethylallyladenosine(37) in tRNA + (sulfur carrier)-H + 5'-deoxyadenosine + L-methionine + A + S-adenosyl-L-homocysteine + 2 H(+). Functionally, catalyzes the methylthiolation of N6-(dimethylallyl)adenosine (i(6)A), leading to the formation of 2-methylthio-N6-(dimethylallyl)adenosine (ms(2)i(6)A) at position 37 in tRNAs that read codons beginning with uridine. This is tRNA-2-methylthio-N(6)-dimethylallyladenosine synthase from Stutzerimonas stutzeri (strain A1501) (Pseudomonas stutzeri).